The following is a 138-amino-acid chain: Large-conductance mechanosensitive channel (138 aa).

Transmembrane regions (helical) follow at residues 15–35 (VDLA…NSIV), 38–58 (IIMP…MFIQ), and 80–100 (GNFI…FLVV).

Belongs to the MscL family. As to quaternary structure, homopentamer.

Its subcellular location is the cell inner membrane. Functionally, channel that opens in response to stretch forces in the membrane lipid bilayer. May participate in the regulation of osmotic pressure changes within the cell. The polypeptide is Large-conductance mechanosensitive channel (Brucella ovis (strain ATCC 25840 / 63/290 / NCTC 10512)).